The sequence spans 83 residues: Small ribosomal subunit protein bS16 (83 aa).

This sequence belongs to the bacterial ribosomal protein bS16 family.

This Albidiferax ferrireducens (strain ATCC BAA-621 / DSM 15236 / T118) (Rhodoferax ferrireducens) protein is Small ribosomal subunit protein bS16.